The chain runs to 429 residues: Gamma-glutamyl phosphate reductase (429 aa).

This sequence belongs to the gamma-glutamyl phosphate reductase family.

It is found in the cytoplasm. The enzyme catalyses L-glutamate 5-semialdehyde + phosphate + NADP(+) = L-glutamyl 5-phosphate + NADPH + H(+). It functions in the pathway amino-acid biosynthesis; L-proline biosynthesis; L-glutamate 5-semialdehyde from L-glutamate: step 2/2. Functionally, catalyzes the NADPH-dependent reduction of L-glutamate 5-phosphate into L-glutamate 5-semialdehyde and phosphate. The product spontaneously undergoes cyclization to form 1-pyrroline-5-carboxylate. The protein is Gamma-glutamyl phosphate reductase of Nocardioides sp. (strain ATCC BAA-499 / JS614).